Consider the following 144-residue polypeptide: Transcriptional regulator MraZ (144 aa).

2 SpoVT-AbrB domains span residues 5–47 (EYQY…PLDR) and 76–121 (AHKT…SQER).

Belongs to the MraZ family. Forms oligomers.

It is found in the cytoplasm. The protein resides in the nucleoid. In Thermus thermophilus (strain ATCC BAA-163 / DSM 7039 / HB27), this protein is Transcriptional regulator MraZ.